Here is a 212-residue protein sequence, read N- to C-terminus: Cytidylate kinase (212 aa).

7-15 (GPAASGKGT) is an ATP binding site.

This sequence belongs to the cytidylate kinase family. Type 1 subfamily.

The protein resides in the cytoplasm. It catalyses the reaction CMP + ATP = CDP + ADP. The enzyme catalyses dCMP + ATP = dCDP + ADP. The protein is Cytidylate kinase of Bradyrhizobium diazoefficiens (strain JCM 10833 / BCRC 13528 / IAM 13628 / NBRC 14792 / USDA 110).